The sequence spans 908 residues: MATIHVDGKEYEVNGADNLLEACLSLGLDIPYFCWHPALGSVGACRQCAVKQYQNAEDTRGRLVMSCMTPASDGTFISIDDEEAKQFRESVVEWLMTNHPHDCPVCEEGGNCHLQDMTVMTGHSFRRYRFTKRTHRNQDLGPFISHEMNRCIACYRCVRYYKDYADGTDLGVYGAHDNVYFGRPEDGTLESEFSGNLVEICPTGVFTDKTHSERYNRKWDMQFAPSICQQCSIGCNISPGERYGELRRIENRYNGTVNHYFLCDRGRFGYGYVNLKDRPRQPVQRRGDDFITLNAEQAMQGAADILRQSKKVIGIGSPRASVESNFALRELVGEENFYTGIAHGEQERLQLALKVLREGGIYTPALREIESYDAVLVLGEDVTQTGARVALAVRQAVKGKAREMAAAQKVADWQIAAILNIGQRAKHPLFVTNVDDTRLDDIAAWTYRAPVEDQARLGFAIAHALDNSAPAVDGIEPELQSKIDVIVQALAGAKKPLIISGTNTGSAEVIQAAANVAKALKGRGADVGITMIARSVNSMGLGIMGGGSLEEALTELETGRADAVVVLENDLHRHASATRVNAALAKAPLVMVVDHQRTAIMENAHLVLSAASFAESDGTVINNEGRAQRFFQVYDPAYYDSQTVMLESWRWLHSLHSTLLSREVDWTQLDHVIDAVVAKIPELAGIKDAAPDATFRIRGQKLAREPHRYSGRTAMRANISVHEPRQPQDIDTMFTFSMEGNNQPTAHRSQVPFAWAPGWNSPQAWNKFQDEVGGKLRFGDPGVRLFETSENSLDYFTSVPARFQPQDGKWRIAPYYHLFGSDELSQRAPVFQSRMPQPYIKLNPADAAKLGVNAGTRVSFSYDGNMVTLPVEISEGLTAGQVGLPMGMSGIAPVLAGAHLEDLKEAQQ.

A 2Fe-2S ferredoxin-type domain is found at alanine 2 to glutamate 83. The [2Fe-2S] cluster site is built by cysteine 34, cysteine 45, cysteine 48, and cysteine 67. The 4Fe-4S His(Cys)3-ligated-type domain occupies glutamate 83–glycine 122. Histidine 99, cysteine 103, cysteine 106, cysteine 112, cysteine 151, cysteine 154, cysteine 157, cysteine 201, cysteine 228, cysteine 231, cysteine 235, and cysteine 263 together coordinate [4Fe-4S] cluster. Positions methionine 221 to aspartate 277 constitute a 4Fe-4S Mo/W bis-MGD-type domain.

Belongs to the complex I 75 kDa subunit family. As to quaternary structure, composed of 13 different subunits. Subunits NuoCD, E, F, and G constitute the peripheral sector of the complex. The cofactor is [2Fe-2S] cluster. [4Fe-4S] cluster serves as cofactor.

The enzyme catalyses a quinone + NADH + 5 H(+)(in) = a quinol + NAD(+) + 4 H(+)(out). Its function is as follows. NDH-1 shuttles electrons from NADH, via FMN and iron-sulfur (Fe-S) centers, to quinones in the respiratory chain. The immediate electron acceptor for the enzyme in this species is believed to be ubiquinone. Couples the redox reaction to proton translocation (for every two electrons transferred, four hydrogen ions are translocated across the cytoplasmic membrane), and thus conserves the redox energy in a proton gradient. The polypeptide is NADH-quinone oxidoreductase subunit G (nuoG) (Escherichia coli O6:H1 (strain CFT073 / ATCC 700928 / UPEC)).